The primary structure comprises 55 residues: Large ribosomal subunit protein bL33 (55 aa).

It belongs to the bacterial ribosomal protein bL33 family.

This chain is Large ribosomal subunit protein bL33, found in Methylobacterium nodulans (strain LMG 21967 / CNCM I-2342 / ORS 2060).